Here is a 463-residue protein sequence, read N- to C-terminus: Retinoic acid receptor RXR-gamma (463 aa).

The interval 1-138 (MYGNYSHFMK…TSPGSLVKHI (138 aa)) is modulating. Positions 18 to 53 (SPGHTGSTSMSPSAALSTGKPMDSHPSYTDTPVSAP) are disordered. Polar residues predominate over residues 21–33 (HTGSTSMSPSAAL). Residues 136–211 (KHICAICGDR…MGMKREAVQE (76 aa)) constitute a DNA-binding region (nuclear receptor). NR C4-type zinc fingers lie at residues 139-159 (CAIC…CEGC) and 175-199 (CRDN…YQKC). A hinge region spans residues 205–230 (KREAVQEERQRSRERAESEAECATSG). The 229-residue stretch at 231–459 (HEDMPVERIL…TFLMEMLETP (229 aa)) folds into the NR LBD domain.

It belongs to the nuclear hormone receptor family. NR2 subfamily. As to quaternary structure, homodimer. Heterodimer with a RAR molecule. Binds DNA preferentially as a RAR/RXR heterodimer. Interacts with RARA. In terms of processing, acetylated by EP300. In terms of tissue distribution, expressed in aortic endothelial cells (at protein level).

The protein localises to the nucleus. It is found in the cytoplasm. Its function is as follows. Receptor for retinoic acid. Retinoic acid receptors bind as heterodimers to their target response elements in response to their ligands, all-trans or 9-cis retinoic acid, and regulate gene expression in various biological processes. The RAR/RXR heterodimers bind to the retinoic acid response elements (RARE) composed of tandem 5'-AGGTCA-3' sites known as DR1-DR5. The high affinity ligand for RXRs is 9-cis retinoic acid. The sequence is that of Retinoic acid receptor RXR-gamma (RXRG) from Homo sapiens (Human).